Consider the following 245-residue polypeptide: Carbohydrate deacetylase (245 aa).

Residues H59 and H121 each coordinate Mg(2+).

Belongs to the YdjC deacetylase family. In terms of assembly, homodimer. Mg(2+) serves as cofactor.

Its function is as follows. Probably catalyzes the deacetylation of acetylated carbohydrates an important step in the degradation of oligosaccharides. This chain is Carbohydrate deacetylase, found in Clostridium beijerinckii (strain ATCC 51743 / NCIMB 8052) (Clostridium acetobutylicum).